Reading from the N-terminus, the 284-residue chain is Lipoyl synthase (284 aa).

C38, C43, C49, C64, C68, C71, and S277 together coordinate [4Fe-4S] cluster. The Radical SAM core domain occupies 50 to 266 (WSRGTATFLL…RDEALGMGFS (217 aa)).

This sequence belongs to the radical SAM superfamily. Lipoyl synthase family. [4Fe-4S] cluster serves as cofactor.

It localises to the cytoplasm. It catalyses the reaction [[Fe-S] cluster scaffold protein carrying a second [4Fe-4S](2+) cluster] + N(6)-octanoyl-L-lysyl-[protein] + 2 oxidized [2Fe-2S]-[ferredoxin] + 2 S-adenosyl-L-methionine + 4 H(+) = [[Fe-S] cluster scaffold protein] + N(6)-[(R)-dihydrolipoyl]-L-lysyl-[protein] + 4 Fe(3+) + 2 hydrogen sulfide + 2 5'-deoxyadenosine + 2 L-methionine + 2 reduced [2Fe-2S]-[ferredoxin]. It functions in the pathway protein modification; protein lipoylation via endogenous pathway; protein N(6)-(lipoyl)lysine from octanoyl-[acyl-carrier-protein]: step 2/2. Catalyzes the radical-mediated insertion of two sulfur atoms into the C-6 and C-8 positions of the octanoyl moiety bound to the lipoyl domains of lipoate-dependent enzymes, thereby converting the octanoylated domains into lipoylated derivatives. The chain is Lipoyl synthase from Chlorobium phaeovibrioides (strain DSM 265 / 1930) (Prosthecochloris vibrioformis (strain DSM 265)).